Consider the following 273-residue polypeptide: Serine acetyltransferase (273 aa).

This sequence belongs to the transferase hexapeptide repeat family. In terms of assembly, homohexamer. Dimer of a homotrimer.

It localises to the cytoplasm. The catalysed reaction is L-serine + acetyl-CoA = O-acetyl-L-serine + CoA. It functions in the pathway amino-acid biosynthesis; L-cysteine biosynthesis; L-cysteine from L-serine: step 1/2. This Shigella flexneri protein is Serine acetyltransferase (cysE).